A 321-amino-acid polypeptide reads, in one-letter code: Protein-L-isoaspartate O-methyltransferase (321 aa).

Positions 21 to 31 (KPAERQREKRI) are enriched in basic and acidic residues. The segment at 21-65 (KPAERQREKRISSGVNAVSLPTPARTASAERASSTPAPGPGPQRV) is disordered. Residues 41-56 (PTPARTASAERASSTP) are compositionally biased toward low complexity. Ser153 is a catalytic residue.

Belongs to the methyltransferase superfamily. L-isoaspartyl/D-aspartyl protein methyltransferase family.

The protein resides in the cytoplasm. The catalysed reaction is [protein]-L-isoaspartate + S-adenosyl-L-methionine = [protein]-L-isoaspartate alpha-methyl ester + S-adenosyl-L-homocysteine. Functionally, catalyzes the methyl esterification of L-isoaspartyl residues in peptides and proteins that result from spontaneous decomposition of normal L-aspartyl and L-asparaginyl residues. It plays a role in the repair and/or degradation of damaged proteins. The chain is Protein-L-isoaspartate O-methyltransferase from Ralstonia nicotianae (strain ATCC BAA-1114 / GMI1000) (Ralstonia solanacearum).